The primary structure comprises 358 residues: 3-dehydroquinate synthase (358 aa).

Residues D70–K75, G104–D108, T128–T129, K141, K150, and C168–T171 each bind NAD(+). Residues E183, H246, and H263 each coordinate Zn(2+).

Belongs to the sugar phosphate cyclases superfamily. Dehydroquinate synthase family. It depends on Co(2+) as a cofactor. Zn(2+) serves as cofactor. NAD(+) is required as a cofactor.

It localises to the cytoplasm. It carries out the reaction 7-phospho-2-dehydro-3-deoxy-D-arabino-heptonate = 3-dehydroquinate + phosphate. Its pathway is metabolic intermediate biosynthesis; chorismate biosynthesis; chorismate from D-erythrose 4-phosphate and phosphoenolpyruvate: step 2/7. Its function is as follows. Catalyzes the conversion of 3-deoxy-D-arabino-heptulosonate 7-phosphate (DAHP) to dehydroquinate (DHQ). The chain is 3-dehydroquinate synthase from Shewanella frigidimarina (strain NCIMB 400).